The following is a 228-amino-acid chain: 5'-methylthioadenosine/S-adenosylhomocysteine nucleosidase (228 aa).

Glutamate 11 serves as the catalytic Proton acceptor. Residues glycine 77, isoleucine 151, and methionine 172–glutamate 173 each bind substrate. Residue aspartate 196 is the Proton donor of the active site.

The protein belongs to the PNP/UDP phosphorylase family. MtnN subfamily.

It catalyses the reaction S-adenosyl-L-homocysteine + H2O = S-(5-deoxy-D-ribos-5-yl)-L-homocysteine + adenine. It carries out the reaction S-methyl-5'-thioadenosine + H2O = 5-(methylsulfanyl)-D-ribose + adenine. The catalysed reaction is 5'-deoxyadenosine + H2O = 5-deoxy-D-ribose + adenine. It participates in amino-acid biosynthesis; L-methionine biosynthesis via salvage pathway; S-methyl-5-thio-alpha-D-ribose 1-phosphate from S-methyl-5'-thioadenosine (hydrolase route): step 1/2. Catalyzes the irreversible cleavage of the glycosidic bond in both 5'-methylthioadenosine (MTA) and S-adenosylhomocysteine (SAH/AdoHcy) to adenine and the corresponding thioribose, 5'-methylthioribose and S-ribosylhomocysteine, respectively. Also cleaves 5'-deoxyadenosine, a toxic by-product of radical S-adenosylmethionine (SAM) enzymes, into 5-deoxyribose and adenine. This is 5'-methylthioadenosine/S-adenosylhomocysteine nucleosidase from Staphylococcus haemolyticus (strain JCSC1435).